The following is a 210-amino-acid chain: N-(5'-phosphoribosyl)anthranilate isomerase (210 aa).

Belongs to the TrpF family.

It catalyses the reaction N-(5-phospho-beta-D-ribosyl)anthranilate = 1-(2-carboxyphenylamino)-1-deoxy-D-ribulose 5-phosphate. It functions in the pathway amino-acid biosynthesis; L-tryptophan biosynthesis; L-tryptophan from chorismate: step 3/5. The sequence is that of N-(5'-phosphoribosyl)anthranilate isomerase from Crocosphaera subtropica (strain ATCC 51142 / BH68) (Cyanothece sp. (strain ATCC 51142)).